A 471-amino-acid polypeptide reads, in one-letter code: Putative multidrug resistance protein MdtD (471 aa).

Over M1–Q11 the chain is Periplasmic. Residues L12 to A32 form a helical membrane-spanning segment. Residues L33 to H48 lie on the Cytoplasmic side of the membrane. The helical transmembrane segment at M49–A69 threads the bilayer. The Periplasmic portion of the chain corresponds to D70–N76. A helical membrane pass occupies residues I77–T97. The Cytoplasmic portion of the chain corresponds to L98–L101. The chain crosses the membrane as a helical span at residues L102–M124. Topologically, residues K125 to T137 are periplasmic. Residues F138–V158 traverse the membrane as a helical segment. The Cytoplasmic portion of the chain corresponds to E159–H164. Residues W165–M185 form a helical membrane-spanning segment. Residues P186 to D196 lie on the Periplasmic side of the membrane. A helical transmembrane segment spans residues L197–S217. Topologically, residues K218–P224 are cytoplasmic. Residues L225 to A245 traverse the membrane as a helical segment. Residues R246–T262 are Periplasmic-facing. Residues F263–M283 form a helical membrane-spanning segment. The Cytoplasmic segment spans residues T284–P285. Residues V286 to M306 traverse the membrane as a helical segment. The Periplasmic segment spans residues V307–T341. Residues L342–L362 form a helical membrane-spanning segment. Residues Q363–S395 are Cytoplasmic-facing. A helical membrane pass occupies residues M396–F416. The Periplasmic portion of the chain corresponds to G417–T430. The helical transmembrane segment at V431–A451 threads the bilayer. The Cytoplasmic segment spans residues R452–Q471.

Belongs to the major facilitator superfamily. TCR/Tet family.

It is found in the cell inner membrane. This is Putative multidrug resistance protein MdtD from Escherichia coli O157:H7.